The following is a 315-amino-acid chain: Replication factor C small subunit (315 aa).

43-50 contacts ATP; it reads GSPGVGKT.

Belongs to the activator 1 small subunits family. RfcS subfamily. In terms of assembly, heteromultimer composed of small subunits (RfcS) and large subunits (RfcL).

Its function is as follows. Part of the RFC clamp loader complex which loads the PCNA sliding clamp onto DNA. This is Replication factor C small subunit from Methanococcus vannielii (strain ATCC 35089 / DSM 1224 / JCM 13029 / OCM 148 / SB).